Here is a 61-residue protein sequence, read N- to C-terminus: Small ribosomal subunit protein uS14 (61 aa).

Zn(2+) contacts are provided by C24, C27, C40, and C43.

The protein belongs to the universal ribosomal protein uS14 family. Zinc-binding uS14 subfamily. In terms of assembly, part of the 30S ribosomal subunit. Contacts proteins S3 and S10. Zn(2+) is required as a cofactor.

In terms of biological role, binds 16S rRNA, required for the assembly of 30S particles and may also be responsible for determining the conformation of the 16S rRNA at the A site. The polypeptide is Small ribosomal subunit protein uS14 (Geotalea daltonii (strain DSM 22248 / JCM 15807 / FRC-32) (Geobacter daltonii)).